Consider the following 506-residue polypeptide: Gamma-aminobutyric acid receptor subunit epsilon (506 aa).

Positions 1–17 are cleaved as a signal peptide; that stretch reads MLPKVLLMLLNMFLALQ. At 18–277 the chain is on the extracellular side; it reads WRVGPHIKLE…MTFFFNVSRR (260 aa). The tract at residues 32-65 is disordered; it reads AQDKVVFGPQPQPSGKKLPARETELTADHTTERP. The segment covering 50-65 has biased composition (basic and acidic residues); it reads PARETELTADHTTERP. N135 carries an N-linked (GlcNAc...) asparagine glycan. Cysteines 196 and 210 form a disulfide. N253 carries N-linked (GlcNAc...) asparagine glycosylation. A helical transmembrane segment spans residues 278–298; the sequence is FGFIVFQNYIPSSVTTMLSWV. Topologically, residues 299–308 are cytoplasmic; the sequence is SFWIKIEAAA. Residues 309–328 traverse the membrane as a helical segment; sequence ARASVGVSSVLTMATLGTFS. The Extracellular portion of the chain corresponds to 329 to 344; sequence RKNFPRVSYLTALDFY. Residues 345–365 traverse the membrane as a helical segment; the sequence is IAICFVLCFCTLLEFTVLNFL. At 366–485 the chain is on the cytoplasmic side; the sequence is TYNNIERQAS…HVYRLDNYSR (120 aa). Residues 486–506 form a helical membrane-spanning segment; the sequence is VLFPITFFFFNVVYWVICLNL.

The protein belongs to the ligand-gated ion channel (TC 1.A.9) family. Gamma-aminobutyric acid receptor (TC 1.A.9.5) subfamily. GABRE sub-subfamily. In terms of assembly, heteropentamer, formed by a combination of alpha (GABRA1-6), beta (GABRB1-3), gamma (GABRG1-3), delta (GABRD), epsilon (GABRE), rho (GABRR1-3), pi (GABRP) and theta (GABRQ) chains, each subunit exhibiting distinct physiological and pharmacological properties. As to expression, expressed in brain and heart. Strongly expressed in locus ceruleus from the first postnatal day. Weakly expressed in other brainstem nuclei and in the hypothalamus. Found in the cerebral cortex of pups.

The protein resides in the cell membrane. Its subcellular location is the postsynaptic cell membrane. The catalysed reaction is chloride(in) = chloride(out). Functionally, epsilon subunit of the heteropentameric ligand-gated chloride channel gated by gamma-aminobutyric acid (GABA), a major inhibitory neurotransmitter in the brain. GABA-gated chloride channels, also named GABA(A) receptors (GABAAR), consist of five subunits arranged around a central pore and contain GABA active binding site(s) located at the alpha and beta subunit interfaces. When activated by GABA, GABAARs selectively allow the flow of chloride anions across the cell membrane down their electrochemical gradient. GABARs containing epsilon subunit may also permit spontaneous chloride channel activity while preserving the structural information required for GABA-gated openings. GABARs containing epsilon subunit may regulate cardiac function. The polypeptide is Gamma-aminobutyric acid receptor subunit epsilon (Rattus norvegicus (Rat)).